The chain runs to 301 residues: Ornithine carbamoyltransferase (301 aa).

Residues Arg-107 and 134 to 137 (HPLQ) contribute to the carbamoyl phosphate site. L-ornithine-binding positions include Asn-165, Asp-220, and 224–225 (SM). Carbamoyl phosphate-binding positions include 260-261 (CL) and Arg-288.

The protein belongs to the aspartate/ornithine carbamoyltransferase superfamily. OTCase family. As to quaternary structure, homotrimer.

It localises to the cytoplasm. It carries out the reaction carbamoyl phosphate + L-ornithine = L-citrulline + phosphate + H(+). It participates in amino-acid biosynthesis; L-arginine biosynthesis; L-arginine from L-ornithine and carbamoyl phosphate: step 1/3. Its activity is regulated as follows. Inhibited by delta-N-phosphonoacetyl-L-ornithine. In terms of biological role, reversibly catalyzes the transfer of the carbamoyl group from carbamoyl phosphate (CP) to the N(epsilon) atom of ornithine (ORN) to produce L-citrulline, which is a substrate for argininosuccinate synthetase, the enzyme involved in the final step in arginine biosynthesis. The polypeptide is Ornithine carbamoyltransferase (Thermus thermophilus (strain ATCC BAA-163 / DSM 7039 / HB27)).